The primary structure comprises 378 residues: Succinyl-diaminopimelate desuccinylase (378 aa).

H68 is a Zn(2+) binding site. The active site involves D70. A Zn(2+)-binding site is contributed by D101. The active-site Proton acceptor is the E135. Residues E136, E164, and H350 each coordinate Zn(2+).

It belongs to the peptidase M20A family. DapE subfamily. As to quaternary structure, homodimer. Zn(2+) is required as a cofactor. It depends on Co(2+) as a cofactor.

It carries out the reaction N-succinyl-(2S,6S)-2,6-diaminopimelate + H2O = (2S,6S)-2,6-diaminopimelate + succinate. The protein operates within amino-acid biosynthesis; L-lysine biosynthesis via DAP pathway; LL-2,6-diaminopimelate from (S)-tetrahydrodipicolinate (succinylase route): step 3/3. Its function is as follows. Catalyzes the hydrolysis of N-succinyl-L,L-diaminopimelic acid (SDAP), forming succinate and LL-2,6-diaminopimelate (DAP), an intermediate involved in the bacterial biosynthesis of lysine and meso-diaminopimelic acid, an essential component of bacterial cell walls. This is Succinyl-diaminopimelate desuccinylase from Acinetobacter baumannii (strain ATCC 17978 / DSM 105126 / CIP 53.77 / LMG 1025 / NCDC KC755 / 5377).